A 498-amino-acid polypeptide reads, in one-letter code: Lysine--tRNA ligase (498 aa).

The Mg(2+) site is built by glutamate 408 and glutamate 415.

Belongs to the class-II aminoacyl-tRNA synthetase family. In terms of assembly, homodimer. The cofactor is Mg(2+).

It is found in the cytoplasm. It carries out the reaction tRNA(Lys) + L-lysine + ATP = L-lysyl-tRNA(Lys) + AMP + diphosphate. The chain is Lysine--tRNA ligase from Listeria monocytogenes serovar 1/2a (strain ATCC BAA-679 / EGD-e).